The following is a 245-amino-acid chain: 1-(5-phosphoribosyl)-5-[(5-phosphoribosylamino)methylideneamino] imidazole-4-carboxamide isomerase (245 aa).

The active-site Proton acceptor is Asp-7. The active-site Proton donor is Asp-129.

It belongs to the HisA/HisF family.

It is found in the cytoplasm. It carries out the reaction 1-(5-phospho-beta-D-ribosyl)-5-[(5-phospho-beta-D-ribosylamino)methylideneamino]imidazole-4-carboxamide = 5-[(5-phospho-1-deoxy-D-ribulos-1-ylimino)methylamino]-1-(5-phospho-beta-D-ribosyl)imidazole-4-carboxamide. The protein operates within amino-acid biosynthesis; L-histidine biosynthesis; L-histidine from 5-phospho-alpha-D-ribose 1-diphosphate: step 4/9. This is 1-(5-phosphoribosyl)-5-[(5-phosphoribosylamino)methylideneamino] imidazole-4-carboxamide isomerase from Vibrio vulnificus (strain CMCP6).